Here is a 398-residue protein sequence, read N- to C-terminus: tRNA(Ile)-lysidine synthase (398 aa).

25-30 serves as a coordination point for ATP; that stretch reads SGGVDS.

Belongs to the tRNA(Ile)-lysidine synthase family.

It localises to the cytoplasm. The catalysed reaction is cytidine(34) in tRNA(Ile2) + L-lysine + ATP = lysidine(34) in tRNA(Ile2) + AMP + diphosphate + H(+). Functionally, ligates lysine onto the cytidine present at position 34 of the AUA codon-specific tRNA(Ile) that contains the anticodon CAU, in an ATP-dependent manner. Cytidine is converted to lysidine, thus changing the amino acid specificity of the tRNA from methionine to isoleucine. The sequence is that of tRNA(Ile)-lysidine synthase from Francisella tularensis subsp. holarctica (strain OSU18).